Reading from the N-terminus, the 140-residue chain is MAIERTFSMIKPDATKRNLTGAITKMLEDAGLKVVASKRVWMSRRQAEGFYAVHKDRPFFDELCEFMSSGPTVIQVLEGENAIAKNREVMGATNPANAAEGTIRKVFALSIGENSVHGSDAPETAEQEIRYWFSETEIVG.

Residues K11, F59, R87, T93, R104, and N114 each contribute to the ATP site. Residue H117 is the Pros-phosphohistidine intermediate of the active site.

Belongs to the NDK family. In terms of assembly, homotetramer. Requires Mg(2+) as cofactor.

It is found in the cytoplasm. The catalysed reaction is a 2'-deoxyribonucleoside 5'-diphosphate + ATP = a 2'-deoxyribonucleoside 5'-triphosphate + ADP. It catalyses the reaction a ribonucleoside 5'-diphosphate + ATP = a ribonucleoside 5'-triphosphate + ADP. In terms of biological role, major role in the synthesis of nucleoside triphosphates other than ATP. The ATP gamma phosphate is transferred to the NDP beta phosphate via a ping-pong mechanism, using a phosphorylated active-site intermediate. The polypeptide is Nucleoside diphosphate kinase (Chelativorans sp. (strain BNC1)).